The primary structure comprises 864 residues: Leucine--tRNA ligase (864 aa).

Residues 42–52 (PYPSGKLHMGH) carry the 'HIGH' region motif. Positions 624 to 628 (KMSKS) match the 'KMSKS' region motif. An ATP-binding site is contributed by lysine 627.

This sequence belongs to the class-I aminoacyl-tRNA synthetase family.

It is found in the cytoplasm. The catalysed reaction is tRNA(Leu) + L-leucine + ATP = L-leucyl-tRNA(Leu) + AMP + diphosphate. The sequence is that of Leucine--tRNA ligase from Paraburkholderia phymatum (strain DSM 17167 / CIP 108236 / LMG 21445 / STM815) (Burkholderia phymatum).